A 468-amino-acid chain; its full sequence is Chitoporin (468 aa).

The first 32 residues, 1 to 32, serve as a signal peptide directing secretion; it reads MRTFSGKRSTLALAIAGVTAMSGFMAMPEARA.

It belongs to the outer membrane porin (Opr) (TC 1.B.25) family.

The protein resides in the cell outer membrane. Involved in the uptake of chitosugars. This chain is Chitoporin (chiP), found in Escherichia coli (strain K12).